The sequence spans 76 residues: Omega-conotoxin-like TxMKLT1-0211 (76 aa).

An N-terminal signal peptide occupies residues 1-22 (MKLTCMMIVAVLFLTAWTFVTA). The propeptide occupies 23 to 52 (VPHSSNALENLYLKAHHEMNNPEDSELNKR). Disulfide bonds link C53–C67, C60–C71, and C66–C75.

Belongs to the conotoxin O1 superfamily. As to expression, expressed by the venom duct.

It is found in the secreted. Its function is as follows. Omega-conotoxins act at presynaptic membranes, they bind and block voltage-gated calcium channels (Cav). The polypeptide is Omega-conotoxin-like TxMKLT1-0211 (Conus textile (Cloth-of-gold cone)).